The sequence spans 149 residues: D-aminoacyl-tRNA deacylase (149 aa).

The Gly-cisPro motif, important for rejection of L-amino acids motif lies at 138–139; that stretch reads GP.

This sequence belongs to the DTD family. As to quaternary structure, homodimer.

The protein localises to the cytoplasm. The catalysed reaction is glycyl-tRNA(Ala) + H2O = tRNA(Ala) + glycine + H(+). It catalyses the reaction a D-aminoacyl-tRNA + H2O = a tRNA + a D-alpha-amino acid + H(+). In terms of biological role, an aminoacyl-tRNA editing enzyme that deacylates mischarged D-aminoacyl-tRNAs. Also deacylates mischarged glycyl-tRNA(Ala), protecting cells against glycine mischarging by AlaRS. Acts via tRNA-based rather than protein-based catalysis; rejects L-amino acids rather than detecting D-amino acids in the active site. By recycling D-aminoacyl-tRNA to D-amino acids and free tRNA molecules, this enzyme counteracts the toxicity associated with the formation of D-aminoacyl-tRNA entities in vivo and helps enforce protein L-homochirality. In Chlorobaculum parvum (strain DSM 263 / NCIMB 8327) (Chlorobium vibrioforme subsp. thiosulfatophilum), this protein is D-aminoacyl-tRNA deacylase.